The chain runs to 266 residues: MPLGLKPTCSMCKTTSSSMWKKSPQGEILCHHCTGRGGGGAGVAGGTGGGGGGGGGFGTTTFATTSAGPSQSNGGGGGKQSKQEIHRRSARLRNTKYKSAPAAEKKVSTKGKGRRHIFKLKNPIKAPESVSTIVTAESIFYKGVYYQIGDVVSVIDEQDGKPYYAQIRGFIQDQYCEKSAALTWLIPTLASPRDQFDPASYIIGPEEDLPRKMEYLEFVCHAPSEYFKSRSSPFPTVPTRPEKGYIWTHVGPTPAITIKETVANHL.

Residues 9–33 (CSMCKTTSSSMWKKSPQGEILCHHC) form a GATA-type zinc finger. The span at 59 to 72 (TTTFATTSAGPSQS) shows a compositional bias: low complexity. Residues 59–112 (TTTFATTSAGPSQSNGGGGGKQSKQEIHRRSARLRNTKYKSAPAAEKKVSTKGK) are disordered. A Glycyl lysine isopeptide (Lys-Gly) (interchain with G-Cter in SUMO2) cross-link involves residue K259.

In terms of assembly, component of a chromatin complex, at least composed of KDM5A, GATAD1 and EMSY. In terms of tissue distribution, expressed in the eye (lens, ciliary body, retina, sclera and conjunctiva) at postnatal day 2 and 10. Not detected anywhere at postnatal day 14.

The protein localises to the nucleus. Its function is as follows. Component of some chromatin complex recruited to chromatin sites methylated 'Lys-4' of histone H3 (H3K4me), with a preference for trimethylated form (H3K4me3). This Mus musculus (Mouse) protein is GATA zinc finger domain-containing protein 1 (Gatad1).